The following is a 1083-amino-acid chain: MSSDASLRVVVRARPMNGRETKEGASRCVQFYENTKQIVINESATFTFDAVFADTSDQESVYETTALPLLDRIFAGFNATVLAYGQTGSGKTYTMGTEDNVGTDEMRRGIIPRLVSALFQRIMNTEAPESFAVTVSMFEVYGDNVYDLLRPDKVKLNVHGDEKNCTVVNLTAVPVIDLKGALKQLAVGCHYRTKAETAMNAMSSRSHAVFTVFVEKTATAECDSAFSAKLQLVDLAGSERLKKTEAEGNRMKEGININGGLLILSQVIAALATKQKHIPYRNSVITRVLQDSLGGNSFTVFLACISPADSNSQETLNTLRYADRAKQIKNKPIVNKNPKAEEIAILQAQLKRLQKENADLKQGIAPAEVRFNDANNSAEILSLKEEVVRKTEQLKERAMKQSECIIRMSALTQKNSRLEEDKAKLQSMLTDVRNTVLNEEMLDAAEVVRSIQQVVGDTEESTTLADDDNDETALGGQDDTIYDTERLPELQAELDDLEKQIAMKDENRQKALDEQRAFIEAMQQRESEKTQLVVRISELETEMNKLRQEGKKVTTAAKLAEERRQKLKDLERQHAEDKKVLNDMKKLQETRRRMEETLKKTEDELKNLKTQRLRLLREQRAEASKFQAFKQKHEREMAQMKSKLQKRENDVAIQKRMTDQKLTVLQMRLTEANRANKTLRELNLKRANRKSSPTNASALQNMIEEELEHEMCAQRSHWLCEDLRRQRHDLMQNINTVESMKFEGGKRRRISASADPNVSVVIEGEEEFEVKRQKELTFLRASLETLNEEIKDSLRNETIAGNEERANSRWEKVPAEMRPAFEAVYAQAVAHIRKEIELEFKLARTKSEFTAKIASKASHEEKRKKEDEEMRAKYRELAQCLEDAKSGLHEKIAFLLCLIKENRVDENAIQQFESLKNQFCDVEQKVKKASRRKTTNFMGGLTPKPELQRNERARRAVKYYGNVVNSEDVTMDDSRHQKRKDHSLLAVEMNRTTDDNVKRRVAMSPIKCDDDTRLTEEDEDIENEAMNNATFVKDSFNSATIVLDDSQPSPSNSTFVIGAAPTSEADGVPPIKRKSRRTDLGPL.

The Kinesin motor domain occupies 6-328 (SLRVVVRARP…LRYADRAKQI (323 aa)). Position 85–92 (85–92 (GQTGSGKT)) interacts with ATP. Positions 408–435 (MSALTQKNSRLEEDKAKLQSMLTDVRNT) form a coiled coil. Over residues 458-471 (TEESTTLADDDNDE) the composition is skewed to acidic residues. Residues 458-479 (TEESTTLADDDNDETALGGQDD) form a disordered region. Residues 487 to 650 (LPELQAELDD…KSKLQKREND (164 aa)) adopt a coiled-coil conformation. A compositionally biased stretch (polar residues) spans 1044–1055 (DDSQPSPSNSTF). Residues 1044–1083 (DDSQPSPSNSTFVIGAAPTSEADGVPPIKRKSRRTDLGPL) form a disordered region.

Belongs to the TRAFAC class myosin-kinesin ATPase superfamily. Kinesin family. As to expression, expressed in the gonad.

Its subcellular location is the nucleus. The protein resides in the nucleoplasm. The protein localises to the cytoplasm. It localises to the cytoskeleton. It is found in the spindle. Its subcellular location is the chromosome. Its function is as follows. Required for chromosome movement and orientation on spindle poles in mitosis and meiosis. May play a role in early anterior-posterior chromosome movement in mitotic embryos. This chain is Kinesin-like protein klp-19, found in Caenorhabditis elegans.